Here is a 230-residue protein sequence, read N- to C-terminus: Cytidylate kinase (230 aa).

16-24 (GPASAGKST) contributes to the ATP binding site.

The protein belongs to the cytidylate kinase family. Type 1 subfamily.

The protein localises to the cytoplasm. The catalysed reaction is CMP + ATP = CDP + ADP. The enzyme catalyses dCMP + ATP = dCDP + ADP. The sequence is that of Cytidylate kinase from Lactobacillus johnsonii (strain CNCM I-12250 / La1 / NCC 533).